Here is a 971-residue protein sequence, read N- to C-terminus: Kinesin-like protein KIN-14C (971 aa).

One can recognise a Calponin-homology (CH) domain in the interval 14–119 (ANRRAEVIDW…CLLALKDNVA (106 aa)). Residues 272–357 (IKALETLVNG…QMETKARQME (86 aa)) adopt a coiled-coil conformation. The Kinesin motor domain occupies 472-799 (NIRVYCRVRP…LKFAERVSGV (328 aa)). 556 to 563 (GQTGSGKT) contacts ATP. A coiled-coil region spans residues 809 to 844 (EGKDIKELLEQVASLKDTIARKDMEIEQLQLLKSKS). The span at 839–881 (LLKSKSPNSMTDRNGSNLLRQSTSSTGLSSLPVASQQNQQLSG) shows a compositional bias: polar residues. A disordered region spans residues 839-971 (LLKSKSPNSM…GSLAKPSKRR (133 aa)).

This sequence belongs to the TRAFAC class myosin-kinesin ATPase superfamily. Kinesin family. KIN-14 subfamily.

In Oryza sativa subsp. japonica (Rice), this protein is Kinesin-like protein KIN-14C.